The primary structure comprises 80 residues: Exodeoxyribonuclease 7 small subunit (80 aa).

The protein belongs to the XseB family. As to quaternary structure, heterooligomer composed of large and small subunits.

It localises to the cytoplasm. It carries out the reaction Exonucleolytic cleavage in either 5'- to 3'- or 3'- to 5'-direction to yield nucleoside 5'-phosphates.. Bidirectionally degrades single-stranded DNA into large acid-insoluble oligonucleotides, which are then degraded further into small acid-soluble oligonucleotides. The protein is Exodeoxyribonuclease 7 small subunit of Vibrio vulnificus (strain CMCP6).